The primary structure comprises 385 residues: Lipid-A-disaccharide synthase (385 aa).

This sequence belongs to the LpxB family.

It catalyses the reaction a lipid X + a UDP-2-N,3-O-bis[(3R)-3-hydroxyacyl]-alpha-D-glucosamine = a lipid A disaccharide + UDP + H(+). The protein operates within bacterial outer membrane biogenesis; LPS lipid A biosynthesis. Functionally, condensation of UDP-2,3-diacylglucosamine and 2,3-diacylglucosamine-1-phosphate to form lipid A disaccharide, a precursor of lipid A, a phosphorylated glycolipid that anchors the lipopolysaccharide to the outer membrane of the cell. The sequence is that of Lipid-A-disaccharide synthase from Xylella fastidiosa (strain M23).